A 366-amino-acid polypeptide reads, in one-letter code: Probable methyltransferase-like protein 24 (366 aa).

An N-terminal signal peptide occupies residues 1-29 (MARERPPGRGCGVLRRCLLGAVLLFGLRL). Residues 36-110 (AGPGSPTRSA…GRPRRKGPRW (75 aa)) are disordered. Pro residues predominate over residues 44–63 (SAPPGPAWRPPGPHLPPAPG). The span at 91-100 (TPEPGCCAPR) shows a compositional bias: low complexity.

This sequence belongs to the methyltransferase superfamily.

The protein resides in the secreted. Functionally, probable methyltransferase. The sequence is that of Probable methyltransferase-like protein 24 (METTL24) from Homo sapiens (Human).